Here is a 383-residue protein sequence, read N- to C-terminus: MNNFTLFLFSCLYFIGGNLKALVLGINTRPVVNSLKKLGFYVYSVSYYAPEDLNADEKYYLINPLVHGRLKENYDENKLIEIANKLADEVDCIFITSGVFEFENSKIPGWDNVIGNGPKKINEISNKYKTYKKLKNLGFNIPETKKINNKTQLYKFLEEFKTCILKPIYGSGGSILKIELNNFDDEIINEIKFPIIAQEYIRGKSFSANFIGNTFITFNKQIIIKGMYAGNLTPYINLPNKFVEIFGEVIESFELKGMSGIDFLIKDNGPYIVDINPRILGTYETIEMSASQNLAMVLLNNKYAKEIKPRKVYIKRILFAKEKIIANISKRDFIHDIPKKNAVIEKGEPIATVIAKENIKSIINSVYEECAEYEKRKEDRENI.

Residues 6-26 (LFLFSCLYFIGGNLKALVLGI) traverse the membrane as a helical segment. The region spanning 131 to 303 (YKKLKNLGFN…LAMVLLNNKY (173 aa)) is the ATP-grasp domain.

It localises to the membrane. This is an uncharacterized protein from Methanocaldococcus jannaschii (strain ATCC 43067 / DSM 2661 / JAL-1 / JCM 10045 / NBRC 100440) (Methanococcus jannaschii).